The following is a 438-amino-acid chain: Protein ROOT INITIATION DEFECTIVE 3 (438 aa).

WD repeat units follow at residues 36–74 (AHGL…AEVK), 76–115 (YPVE…LLKK), 118–157 (GHYR…DDFQ), 171–212 (EHTM…LLKN), 214–253 (IFPS…EYGT), and 261–300 (EKGK…HVRT). Residues 394–434 (AATEMEMERLKLEYKRSLQMNEQWQKNYENLLQVVMEEEQI) adopt a coiled-coil conformation.

Functionally, involved in meristem development. Acts as a negative regulator of the CUC-STM pathway in shoot apical meristem (SAM) neo-formation. The polypeptide is Protein ROOT INITIATION DEFECTIVE 3 (RID3) (Arabidopsis thaliana (Mouse-ear cress)).